The sequence spans 351 residues: Nicotinate-nucleotide--dimethylbenzimidazole phosphoribosyltransferase (351 aa).

Glu-317 acts as the Proton acceptor in catalysis.

It belongs to the CobT family.

It catalyses the reaction 5,6-dimethylbenzimidazole + nicotinate beta-D-ribonucleotide = alpha-ribazole 5'-phosphate + nicotinate + H(+). It functions in the pathway nucleoside biosynthesis; alpha-ribazole biosynthesis; alpha-ribazole from 5,6-dimethylbenzimidazole: step 1/2. Catalyzes the synthesis of alpha-ribazole-5'-phosphate from nicotinate mononucleotide (NAMN) and 5,6-dimethylbenzimidazole (DMB). This Pseudomonas fluorescens (strain ATCC BAA-477 / NRRL B-23932 / Pf-5) protein is Nicotinate-nucleotide--dimethylbenzimidazole phosphoribosyltransferase.